The primary structure comprises 468 residues: UDP-N-acetylmuramate--L-alanine ligase (468 aa).

114-120 (GTHGKTT) is a binding site for ATP.

This sequence belongs to the MurCDEF family.

It is found in the cytoplasm. It carries out the reaction UDP-N-acetyl-alpha-D-muramate + L-alanine + ATP = UDP-N-acetyl-alpha-D-muramoyl-L-alanine + ADP + phosphate + H(+). The protein operates within cell wall biogenesis; peptidoglycan biosynthesis. Functionally, cell wall formation. The chain is UDP-N-acetylmuramate--L-alanine ligase from Methylocella silvestris (strain DSM 15510 / CIP 108128 / LMG 27833 / NCIMB 13906 / BL2).